We begin with the raw amino-acid sequence, 353 residues long: Phosphate acyltransferase (353 aa).

Belongs to the PlsX family. As to quaternary structure, homodimer. Probably interacts with PlsY.

The protein localises to the cytoplasm. The enzyme catalyses a fatty acyl-[ACP] + phosphate = an acyl phosphate + holo-[ACP]. It functions in the pathway lipid metabolism; phospholipid metabolism. Functionally, catalyzes the reversible formation of acyl-phosphate (acyl-PO(4)) from acyl-[acyl-carrier-protein] (acyl-ACP). This enzyme utilizes acyl-ACP as fatty acyl donor, but not acyl-CoA. The protein is Phosphate acyltransferase of Rhodopseudomonas palustris (strain HaA2).